The sequence spans 178 residues: ATP-dependent protease subunit HslV (178 aa).

Residue Thr7 is part of the active site. Na(+)-binding residues include Gly162, Cys165, and Thr168.

It belongs to the peptidase T1B family. HslV subfamily. As to quaternary structure, a double ring-shaped homohexamer of HslV is capped on each side by a ring-shaped HslU homohexamer. The assembly of the HslU/HslV complex is dependent on binding of ATP.

Its subcellular location is the cytoplasm. It carries out the reaction ATP-dependent cleavage of peptide bonds with broad specificity.. Allosterically activated by HslU binding. Functionally, protease subunit of a proteasome-like degradation complex believed to be a general protein degrading machinery. This Burkholderia vietnamiensis (strain G4 / LMG 22486) (Burkholderia cepacia (strain R1808)) protein is ATP-dependent protease subunit HslV.